We begin with the raw amino-acid sequence, 205 residues long: Transcriptional regulator GfcR (205 aa).

It belongs to the purine/pyrimidine phosphoribosyltransferase family. GfcR subfamily.

This chain is Transcriptional regulator GfcR, found in Methanococcus maripaludis (strain C7 / ATCC BAA-1331).